A 918-amino-acid chain; its full sequence is Cap-specific mRNA (nucleoside-2'-O-)-methyltransferase 1 (918 aa).

Over residues 1-18 (MADRKSDEGEDEYQHKEQ) the composition is skewed to basic and acidic residues. 2 disordered regions span residues 1 to 56 (MADR…EERA) and 62 to 81 (KRGY…EEEP). The span at 19–30 (MVTNRTSSFQPK) shows a compositional bias: polar residues. Over residues 43 to 56 (RAADRREEFMEERA) the composition is skewed to basic and acidic residues. Over residues 68-80 (GDDEEDDFTAEEE) the composition is skewed to acidic residues. Residues 86-132 (PLTVAERLMAAMGHKAGEGLGKHGQGISEPIASSTQRGRTGLGHNAG) form the G-patch domain. The 230-residue stretch at 236-465 (FFQNRAAMKT…ERYITCKGLR (230 aa)) folds into the RrmJ-type SAM-dependent 2'-O-MTase domain. 2 residues coordinate S-adenosyl-L-methionine: Gly298 and Asp379. Lys419 serves as the catalytic Proton acceptor.

The enzyme catalyses a 5'-end (N(7)-methyl 5'-triphosphoguanosine)-ribonucleoside in mRNA + S-adenosyl-L-methionine = a 5'-end (N(7)-methyl 5'-triphosphoguanosine)-(2'-O-methyl-ribonucleoside) in mRNA + S-adenosyl-L-homocysteine + H(+). S-adenosyl-L-methionine-dependent methyltransferase that mediates mRNA cap1 2'-O-ribose methylation to the 5'-cap structure of mRNAs. Methylates the ribose of the first nucleotide of a m(7)GpppG-capped mRNA to produce m(7)GpppNmp (cap1). Cap1 modification is linked to higher levels of translation. The polypeptide is Cap-specific mRNA (nucleoside-2'-O-)-methyltransferase 1 (Caenorhabditis elegans).